Consider the following 66-residue polypeptide: Phylloseptin-H8 (66 aa).

The signal sequence occupies residues 1 to 22 (MAFLKKSLFLVLFLGLVSLSIC). A propeptide spanning residues 23–44 (EEEKRETEEEENDQEEDDKSEE) is cleaved from the precursor. Residues 25-44 (EKRETEEEENDQEEDDKSEE) form a disordered region. A compositionally biased stretch (acidic residues) spans 30 to 41 (EEEENDQEEDDK). A Leucine amide modification is found at L65.

As to expression, expressed by the skin glands.

It localises to the secreted. Its function is as follows. Has antimicrobial activity. This chain is Phylloseptin-H8, found in Pithecopus hypochondrialis (Orange-legged leaf frog).